We begin with the raw amino-acid sequence, 474 residues long: MRRVVRQSKFRHVFGQAVKNDQCYDDIRVSRVTWDSSFCAVNPRFVAIIIEASGGGAFLVLPLHKTGRIDKSYPTVCGHTGPVLDIDWCPHNDQVIASGSEDCTVMVWQIPENGLTLSLTEPVVILEGHSKRVGIVAWHPTARNVLLSAGCDNAIIIWNVGTGEALINLDDMHSDMIYNVSWSRNGSLICTASKDKKVRVIDPRKQEIVAEKEKAHEGARPMRAIFLADGNVFTTGFSRMSERQLALWNPKNMQEPIALHEMDTSNGVLLPFYDPDTSIIYLCGKGDSSIRYFEITDESPYVHYLNTFSSKEPQRGMGYMPKRGLDVNKCEIARFFKLHERKCEPIIMTVPRKSDLFQDDLYPDTAGPEAALEAEEWFEGKNADPILISLKHGYIPGKNRDLKVVKKNILDSKPAANKKSELSCAPKKPTDTASVQNEAKLDEILKEIKSIKETICSQDERISKLEQQLAKMAA.

WD repeat units follow at residues 78–118, 128–168, 172–202, 215–249, and 263–303; these read GHTG…LTLS, GHSK…ALIN, MHSD…RVID, AHEG…ALWN, and DTSN…PYVH. The stretch at 435–474 forms a coiled coil; the sequence is VQNEAKLDEILKEIKSIKETICSQDERISKLEQQLAKMAA. Lys-446 bears the N6-acetyllysine mark.

It belongs to the WD repeat coronin family. In terms of assembly, homotrimer. Binds F-actin. Interacts with RCC2. Interacts preferentially with nucleotide-free and GDP-bound RAC1. Interacts with VIM (via head domain). Interacts with MICAL2; this interaction recruits MICAL2 to the actin filaments. In terms of tissue distribution, detected in skeletal muscle (at protein level). Detected in fibroblasts (at protein level). Ubiquitous.

It is found in the cell membrane. The protein localises to the cell projection. It localises to the lamellipodium. Its subcellular location is the ruffle membrane. The protein resides in the cytoplasm. It is found in the cytoskeleton. The protein localises to the cell cortex. It localises to the endosome membrane. Plays a role in directed cell migration by regulating the activation and subcellular location of RAC1. Increases the presence of activated RAC1 at the leading edge of migrating cells. Required for normal organization of the cytoskeleton, including the actin cytoskeleton, microtubules and the vimentin intermediate filaments. Required for normal cell proliferation, cell migration, and normal formation of lamellipodia. Plays a role in endoplasmic reticulum-associated endosome fission: localizes to endosome membrane tubules and promotes recruitment of TMCC1, leading to recruitment of the endoplasmic reticulum to endosome tubules for fission. Endosome membrane fission of early and late endosomes is essential to separate regions destined for lysosomal degradation from carriers to be recycled to the plasma membrane. Required for normal distribution of mitochondria within cells. The protein is Coronin-1C (Coro1c) of Mus musculus (Mouse).